The following is a 476-amino-acid chain: MADRWNAGVIPYAEMGYWQPDYEPKDTDILCAFRITPQDGVPPEEAGAAVAGESSTATWTVVWTDRLTTFEHYQAKCYKVDPVPNTPGQWIAYIAYDIDLFEEASIANLTSSIIGNVFGFKPLKALRLEDMRIPTHYVKTFQGPAHGIVMEREHLGKFGRPILGATTKPKLGLSARNYGRVVYEALRGGLDFTKDDENINSQPFMRWRDRFLFCMEAVNRAQAATGEIKGHYLNVTAGTMEEMYERANFAAELGSVIVMIDLTIGYTAIQSMAKWARDNNVILHLHRAGHGTYTRQKNHGVSFRVISKWMRLAGVDHIHAGTVVGKLEGDPMTTAGFYDTLRKDSIKADLSKGLYFDQEWASMPGVMPVASGGIHAGQMHQLIHYLGEDVILQFGGGTIGHPMGIAAGAEANRVALEAMIKARNEGVDYYKEGPEILKKAASRNRALDTALATWGDITFNYESTDTPDVVATPTNA.

Substrate contacts are provided by Asn-116 and Thr-166. Residue Lys-168 is the Proton acceptor of the active site. Substrate is bound at residue Lys-170. 3 residues coordinate Mg(2+): Lys-194, Asp-196, and Glu-197. Position 194 is an N6-carboxylysine (Lys-194). His-286 (proton acceptor) is an active-site residue. Residues Arg-287, His-319, and Ser-371 each coordinate substrate.

It belongs to the RuBisCO large chain family. Type I subfamily. Heterohexadecamer of 8 large chains and 8 small chains. The cofactor is Mg(2+).

The enzyme catalyses 2 (2R)-3-phosphoglycerate + 2 H(+) = D-ribulose 1,5-bisphosphate + CO2 + H2O. It carries out the reaction D-ribulose 1,5-bisphosphate + O2 = 2-phosphoglycolate + (2R)-3-phosphoglycerate + 2 H(+). RuBisCO catalyzes two reactions: the carboxylation of D-ribulose 1,5-bisphosphate, the primary event in carbon dioxide fixation, as well as the oxidative fragmentation of the pentose substrate. Both reactions occur simultaneously and in competition at the same active site. This is Ribulose bisphosphate carboxylase large chain from Pseudonocardia dioxanivorans (strain ATCC 55486 / DSM 44775 / JCM 13855 / CB1190).